The following is a 119-amino-acid chain: Large ribosomal subunit protein bL20c (119 aa).

It belongs to the bacterial ribosomal protein bL20 family.

It localises to the plastid. The protein resides in the chloroplast. In terms of biological role, binds directly to 23S ribosomal RNA and is necessary for the in vitro assembly process of the 50S ribosomal subunit. It is not involved in the protein synthesizing functions of that subunit. In Zea mays (Maize), this protein is Large ribosomal subunit protein bL20c (rpl20).